The chain runs to 345 residues: UDP-3-O-acylglucosamine N-acyltransferase (345 aa).

The Proton acceptor role is filled by H252.

Belongs to the transferase hexapeptide repeat family. LpxD subfamily. Homotrimer.

It carries out the reaction a UDP-3-O-[(3R)-3-hydroxyacyl]-alpha-D-glucosamine + a (3R)-hydroxyacyl-[ACP] = a UDP-2-N,3-O-bis[(3R)-3-hydroxyacyl]-alpha-D-glucosamine + holo-[ACP] + H(+). It participates in bacterial outer membrane biogenesis; LPS lipid A biosynthesis. Its function is as follows. Catalyzes the N-acylation of UDP-3-O-acylglucosamine using 3-hydroxyacyl-ACP as the acyl donor. Is involved in the biosynthesis of lipid A, a phosphorylated glycolipid that anchors the lipopolysaccharide to the outer membrane of the cell. The polypeptide is UDP-3-O-acylglucosamine N-acyltransferase (Rickettsia rickettsii).